The primary structure comprises 335 residues: Phosphatidylinositol:ceramide inositolphosphotransferase (335 aa).

Topologically, residues 1-21 (MVLMGPHSALRLLPLKTQAIR) are cytoplasmic. The chain crosses the membrane as a helical span at residues 22-42 (FVLLLLLSVLILAVALLVTNA). Residues 43-72 (RMPDPKVVRPLPDIGFEVFPKVGWLEHLTD) are Extracellular-facing. Residues 73–93 (VCIFILNFLSLLVVFKLYLLH) form a helical membrane-spanning segment. Over 94 to 98 (RQNEG) the chain is Cytoplasmic. The chain crosses the membrane as a helical span at residues 99–119 (LDELQPFSCCPLIGKIIFGVW). The Extracellular segment spans residues 120 to 139 (DSGRQSGIEKRDAHLIAWIR). A helical transmembrane segment spans residues 140-160 (YFTTYFIVLLFRAIVVVMTSY). Topologically, residues 161 to 179 (PATDNHCQNPMKITNPVKN) are cytoplasmic. A helical transmembrane segment spans residues 180–200 (VIMTLVTFGSGSIHCGDLMFS). The Extracellular segment spans residues 201–203 (GHT). His-202 is a catalytic residue. A helical transmembrane segment spans residues 204–224 (VSITLSLLVQWIYGSMLHWVF). Residues 225–335 (RPASVLLVLL…GPACGNFGHW (111 aa)) lie on the Cytoplasmic side of the membrane. Residues His-245 and Asp-249 contribute to the active site.

The protein belongs to the sphingomyelin synthase family.

It is found in the membrane. Bidirectional lipid inositolphosphotransferase capable of converting phosphatidylinositol (PI) and ceramide to inositol-phosphorylceramide (IPC) and diacylglycerol (DAG) and vice versa. Direction is dependent on the relative concentrations of DAG and ceramide as phosphoinositol acceptors. Essential for viability of the pathogenic bloodstream stage of this human protozoan parasite and, consequently, can be considered as potential drug target. The chain is Phosphatidylinositol:ceramide inositolphosphotransferase from Trypanosoma cruzi (strain CL Brener).